We begin with the raw amino-acid sequence, 305 residues long: MAGTILEPGQIEAAASKPPFTNLPPRDLFALRSARLAKLAEDHPLADYLRLLAGVCQAQQQVLDNPPASAPLDPARTRECFKHAMPPLAADTLVREGAWLPLLDAWLDAFAVPDNLSVIAAVDQLRRADSGQRKAWAVALVSGQYDSLPPALVPFLGAALQLAWTHWLLQLDLSDLREREDQTLCPCCGAPPMAGVIRHRGQLNGLRYLVCSLCACEWHYVRLKCSHCRSTKKLDYLHFEGSPQGIKAEACPECNGYLKQLYLELAPDGESLSADLATLDLDLLLADQGYNRQAPNLLLAPGHEA.

Belongs to the FdhE family.

It localises to the cytoplasm. Its function is as follows. Necessary for formate dehydrogenase activity. The protein is Protein FdhE homolog of Stutzerimonas stutzeri (strain A1501) (Pseudomonas stutzeri).